Consider the following 182-residue polypeptide: Early upstream open reading frame (182 aa).

It belongs to the EUO family.

In Chlamydophila psittaci (strain ATCC VR-125 / 6BC) (Chlamydia psittaci), this protein is Early upstream open reading frame.